We begin with the raw amino-acid sequence, 504 residues long: Kinesin light chain 3 (504 aa).

The stretch at 90-150 (ALSAHVGALE…EEEKRHLEFL (61 aa)) forms a coiled coil. The disordered stretch occupies residues 153-197 (LRQYDPPAESQQSESPPRRDSLASLFPSEEEERKGPEAAGAAAAQ). The segment covering 158-167 (PPAESQQSES) has biased composition (low complexity). Serine 173 is modified (phosphoserine). 5 TPR repeats span residues 207–240 (LRTL…LERS), 249–282 (ATML…REQT), 291–324 (AATL…REKV), 333–366 (AKQL…YEAL), and 375–408 (AKTK…EDLP). Residues 411 to 438 (LGAPNTGTAGDAEQALRRSSSLSKIRES) form a disordered region. Serine 466 carries the phosphoserine modification. At threonine 498 the chain carries Phosphothreonine. Position 502 is a phosphoserine (serine 502).

Belongs to the kinesin light chain family. Oligomer composed of two heavy chains and two light chains. Associates with microtubulin in an ATP-dependent manner. Interacts with KIF5C. Interacts with ODF1. Interacts with LRGUK. Interacts with VDAC2.

The protein resides in the cytoplasm. Its subcellular location is the cytoskeleton. It is found in the mitochondrion. Functionally, kinesin is a microtubule-associated force-producing protein that may play a role in organelle transport. Plays a role during spermiogenesis in the development of the sperm tail midpiece and in the normal function of spermatozoa. May play a role in the formation of the mitochondrial sheath formation in the developing spermatid midpiece. In Pongo abelii (Sumatran orangutan), this protein is Kinesin light chain 3 (KLC3).